The sequence spans 201 residues: Orotate phosphoribosyltransferase (201 aa).

Position 113 to 121 (113 to 121 (EDIITTGKS)) interacts with 5-phospho-alpha-D-ribose 1-diphosphate. 2 residues coordinate orotate: T117 and R145.

This sequence belongs to the purine/pyrimidine phosphoribosyltransferase family. PyrE subfamily. In terms of assembly, homodimer. It depends on Mg(2+) as a cofactor.

The enzyme catalyses orotidine 5'-phosphate + diphosphate = orotate + 5-phospho-alpha-D-ribose 1-diphosphate. It participates in pyrimidine metabolism; UMP biosynthesis via de novo pathway; UMP from orotate: step 1/2. Catalyzes the transfer of a ribosyl phosphate group from 5-phosphoribose 1-diphosphate to orotate, leading to the formation of orotidine monophosphate (OMP). This chain is Orotate phosphoribosyltransferase, found in Helicobacter pylori (strain Shi470).